The sequence spans 308 residues: Cytochrome b (308 aa).

The next 4 helical transmembrane spans lie at 1–21 (FGSL…LMAM), 45–66 (WLIR…YLHI), 81–101 (WNTG…GYVL), and 146–166 (FFAL…VHLT). 2 residues coordinate heme b: His51 and His65. Heme b is bound by residues His150 and His164. Residue His169 coordinates a ubiquinone. 3 helical membrane-spanning segments follow: residues 194–214 (IKDI…AMFS), 256–276 (LGGV…PFLH), and 288–308 (LSQL…WVGS).

It belongs to the cytochrome b family. The cytochrome bc1 complex contains 11 subunits: 3 respiratory subunits (MT-CYB, CYC1 and UQCRFS1), 2 core proteins (UQCRC1 and UQCRC2) and 6 low-molecular weight proteins (UQCRH/QCR6, UQCRB/QCR7, UQCRQ/QCR8, UQCR10/QCR9, UQCR11/QCR10 and a cleavage product of UQCRFS1). This cytochrome bc1 complex then forms a dimer. The cofactor is heme b.

It is found in the mitochondrion inner membrane. Functionally, component of the ubiquinol-cytochrome c reductase complex (complex III or cytochrome b-c1 complex) that is part of the mitochondrial respiratory chain. The b-c1 complex mediates electron transfer from ubiquinol to cytochrome c. Contributes to the generation of a proton gradient across the mitochondrial membrane that is then used for ATP synthesis. This is Cytochrome b (MT-CYB) from Scytalopus magellanicus (Magellanic tapaculo).